The chain runs to 257 residues: MLAVLSPAKKLDETLHPSARLHTLPELLPHTQNLIEQLRGYDAAQLAHLMKLSPTLAELNVQRYQAFHFPFTPANAKAALFMFQGDTYVGLQAGSMDEQALLFAQQHLRILSGLYGVLRPLDLIQPYRLEMGTALVNGRGKDLYAYWGEHLVERLNAASESHGERTLINLASIEYFKGVKRAKLAGALITPIFKEVKGGEAKVIGLMAKRARGMMARYMINQRLESPEPLKTFNQGGYVYQPKLSTAEQWVFTRSAA.

This sequence belongs to the UPF0246 family.

This chain is UPF0246 protein Mmc1_3117, found in Magnetococcus marinus (strain ATCC BAA-1437 / JCM 17883 / MC-1).